The chain runs to 1281 residues: Angiotensin-converting enzyme (1281 aa).

The first 17 residues, 1 to 17 (MPAALGLLLPWLSLVGA), serve as a signal peptide directing secretion. Topologically, residues 18-1241 (LQPGLEPPQS…MSVGTKQATA (1224 aa)) are extracellular. Peptidase M2 domains lie at 28-610 (DPTE…LGWP) and 629-1208 (IVDE…LGWP). 5 N-linked (GlcNAc...) asparagine glycosylation sites follow: Asn42, Asn62, Asn80, Asn99, and Asn148. A disulfide bond links Cys145 and Cys151. Tyr217 provides a ligand contact to chloride. N-linked (GlcNAc...) asparagine glycosylation occurs at Asn304. Cys345 and Cys363 are oxidised to a cystine. His376 serves as a coordination point for Zn(2+). Glu377 (proton acceptor 1) is an active-site residue. His380 and Glu404 together coordinate Zn(2+). N-linked (GlcNAc...) asparagine glycosylation is present at Asn495. Catalysis depends on His506, which acts as the Proton donor 1. Arg515 serves as a coordination point for chloride. Cys531 and Cys543 form a disulfide bridge. N-linked (GlcNAc...) asparagine glycosylation is found at Asn535, Asn573, Asn601, Asn643, Asn663, and Asn746. The cysteines at positions 743 and 749 are disulfide-linked. Chloride-binding residues include Arg777 and Tyr815. A disulfide bond links Cys943 and Cys961. His974 contributes to the Zn(2+) binding site. Glu975 (proton acceptor 2) is an active-site residue. 2 residues coordinate Zn(2+): His978 and Glu1002. Chloride-binding residues include Trp1076 and Arg1080. Catalysis depends on His1104, which acts as the Proton donor 2. Arg1113 serves as a coordination point for chloride. Cys1129 and Cys1141 are disulfide-bonded. Asn1177 carries an N-linked (GlcNAc...) asparagine glycan. Residues 1201 to 1240 (NGEVLGWPEYSWTPYAVTEFHAATDTADFLGMSVGTKQAT) form a juxtamembrane stalk region. Residues 1242–1262 (GAWVLLALALVFLITSIFLGV) traverse the membrane as a helical segment. Residues 1263–1281 (KLFSSRRKAFKSSSEMELK) lie on the Cytoplasmic side of the membrane.

It belongs to the peptidase M2 family. The cofactor is Zn(2+). Chloride serves as cofactor.

It is found in the cell membrane. The protein resides in the cytoplasm. It catalyses the reaction Release of a C-terminal dipeptide, oligopeptide-|-Xaa-Yaa, when Xaa is not Pro, and Yaa is neither Asp nor Glu. Thus, conversion of angiotensin I to angiotensin II, with increase in vasoconstrictor activity, but no action on angiotensin II.. The enzyme catalyses angiotensin I + H2O = L-histidyl-L-leucine + angiotensin II. The catalysed reaction is bradykinin + H2O = L-Phe-L-Arg + bradykinin(1-7). It carries out the reaction substance P + H2O = substance P(1-9) + L-Leu-L-Met-NH2. It catalyses the reaction substance P + H2O = substance P(1-8) + Gly-L-Leu-L-Met-NH2. The enzyme catalyses substance P + H2O = L-Phe-L-Phe-Gly-L-Leu-L-Met-NH2 + substance P(1-6). The catalysed reaction is neurotensin + H2O = neurotensin(1-11) + L-isoleucyl-L-leucine. It carries out the reaction goralatide + H2O = N-acetyl-L-seryl-L-aspartate + L-lysyl-L-proline. It catalyses the reaction Met-enkephalin + H2O = L-phenylalanyl-L-methionine + L-tyrosylglycylglycine. The enzyme catalyses Leu-enkephalin + H2O = L-tyrosylglycylglycine + L-phenylalanyl-L-leucine. The catalysed reaction is Met-enkephalin-Arg-Phe + H2O = L-arginyl-L-phenylalanine + Met-enkephalin. Dipeptidyl carboxypeptidase that removes dipeptides from the C-terminus of a variety of circulating hormones, such as angiotensin I, bradykinin or enkephalins, thereby playing a key role in the regulation of blood pressure, electrolyte homeostasis or synaptic plasticity. Composed of two similar catalytic domains, each possessing a functional active site, with different selectivity for substrates. Plays a major role in the angiotensin-renin system that regulates blood pressure and sodium retention by the kidney by converting angiotensin I to angiotensin II, resulting in an increase of the vasoconstrictor activity of angiotensin. Also able to inactivate bradykinin, a potent vasodilator, and therefore enhance the blood pressure response. Acts as a regulator of synaptic transmission by mediating cleavage of neuropeptide hormones, such as substance P, neurotensin or enkephalins. Catalyzes degradation of different enkephalin neuropeptides (Met-enkephalin, Leu-enkephalin, Met-enkephalin-Arg-Phe and possibly Met-enkephalin-Arg-Gly-Leu). Also acts as a regulator of hematopoietic stem cell differentiation by mediating degradation of hemoregulatory peptide N-acetyl-SDKP (AcSDKP). The chain is Angiotensin-converting enzyme from Gallus gallus (Chicken).